Here is a 112-residue protein sequence, read N- to C-terminus: uncharacterized protein (112 aa).

The next 2 helical transmembrane spans lie at 33-53 and 69-89; these read IIGI…MIIF and MNNI…HITV.

Its subcellular location is the membrane. This is an uncharacterized protein from Saccharomyces cerevisiae (strain ATCC 204508 / S288c) (Baker's yeast).